The sequence spans 408 residues: tRNA-specific 2-thiouridylase MnmA (408 aa).

ATP-binding positions include 27–34 (AMSGGVDS) and L53. Catalysis depends on C121, which acts as the Nucleophile. An intrachain disulfide couples C121 to C222. Residue G145 participates in ATP binding. The interaction with tRNA stretch occupies residues 172–174 (RDQ). The active-site Cysteine persulfide intermediate is the C222.

Belongs to the MnmA/TRMU family.

It localises to the cytoplasm. It catalyses the reaction S-sulfanyl-L-cysteinyl-[protein] + uridine(34) in tRNA + AH2 + ATP = 2-thiouridine(34) in tRNA + L-cysteinyl-[protein] + A + AMP + diphosphate + H(+). In terms of biological role, catalyzes the 2-thiolation of uridine at the wobble position (U34) of tRNA, leading to the formation of s(2)U34. The chain is tRNA-specific 2-thiouridylase MnmA from Rhizobium etli (strain CIAT 652).